The sequence spans 617 residues: RNA polymerase sigma factor RpoD (617 aa).

The segment at 170–220 (PDDGSLPAEEVEPVNLKDDSADSKEKDDEEEESDDSSDSDDEGDGGPDPEE) is disordered. Residues 184–195 (NLKDDSADSKEK) are compositionally biased toward basic and acidic residues. Residues 196–218 (DDEEEESDDSSDSDDEGDGGPDP) are compositionally biased toward acidic residues. A sigma-70 factor domain-2 region spans residues 383–453 (MVEANLRLVI…TRSIADQART (71 aa)). An Interaction with polymerase core subunit RpoC motif is present at residues 407–410 (DLIQ). The interval 462-538 (ETINKLNRIS…DSTMQSPIEM (77 aa)) is sigma-70 factor domain-3. The interval 551-604 (VLAGLTAREAKVLRMRFGIDMNTDHTLEEVGKQFDVTRERIRQIEAKALRKLRH) is sigma-70 factor domain-4. The H-T-H motif DNA-binding region spans 577 to 596 (LEEVGKQFDVTRERIRQIEA).

Belongs to the sigma-70 factor family. RpoD/SigA subfamily. Interacts transiently with the RNA polymerase catalytic core.

It is found in the cytoplasm. Sigma factors are initiation factors that promote the attachment of RNA polymerase to specific initiation sites and are then released. This sigma factor is the primary sigma factor during exponential growth. This Pseudomonas aeruginosa (strain ATCC 15692 / DSM 22644 / CIP 104116 / JCM 14847 / LMG 12228 / 1C / PRS 101 / PAO1) protein is RNA polymerase sigma factor RpoD.